The primary structure comprises 474 residues: 3-isopropylmalate dehydratase large subunit (474 aa).

Residues Cys350, Cys411, and Cys414 each contribute to the [4Fe-4S] cluster site.

Belongs to the aconitase/IPM isomerase family. LeuC type 1 subfamily. Heterodimer of LeuC and LeuD. [4Fe-4S] cluster is required as a cofactor.

The enzyme catalyses (2R,3S)-3-isopropylmalate = (2S)-2-isopropylmalate. The protein operates within amino-acid biosynthesis; L-leucine biosynthesis; L-leucine from 3-methyl-2-oxobutanoate: step 2/4. Catalyzes the isomerization between 2-isopropylmalate and 3-isopropylmalate, via the formation of 2-isopropylmaleate. The polypeptide is 3-isopropylmalate dehydratase large subunit (Hydrogenovibrio crunogenus (strain DSM 25203 / XCL-2) (Thiomicrospira crunogena)).